A 497-amino-acid chain; its full sequence is RNA-splicing ligase RtcB homolog (497 aa).

Mn(2+) is bound by residues D111, C114, H219, H251, and H345. GMP is bound at residue 218–222 (NHYAE). Residues 345 to 346 (HN), 394 to 397 (GGTM), S401, 420 to 423 (HGAG), and K496 contribute to the GMP site. Residue H420 is the GMP-histidine intermediate of the active site.

Belongs to the RtcB family. Catalytic component of the tRNA-splicing ligase complex. It depends on Mn(2+) as a cofactor.

The enzyme catalyses a 3'-end 3'-phospho-ribonucleotide-RNA + a 5'-end dephospho-ribonucleoside-RNA + GTP = a ribonucleotidyl-ribonucleotide-RNA + GMP + diphosphate. The catalysed reaction is a 3'-end 2',3'-cyclophospho-ribonucleotide-RNA + a 5'-end dephospho-ribonucleoside-RNA + GTP + H2O = a ribonucleotidyl-ribonucleotide-RNA + GMP + diphosphate + H(+). Catalytic subunit of the tRNA-splicing ligase complex that acts by directly joining spliced tRNA halves to mature-sized tRNAs by incorporating the precursor-derived splice junction phosphate into the mature tRNA as a canonical 3',5'-phosphodiester. May act as an RNA ligase with broad substrate specificity, and may function toward other RNAs. The protein is RNA-splicing ligase RtcB homolog of Monosiga brevicollis (Choanoflagellate).